The following is a 126-amino-acid chain: Histone H2B type 2-B (126 aa).

The segment covering 1 to 12 (MPDPAKSAPAPK) has biased composition (low complexity). The tract at residues 1–36 (MPDPAKSAPAPKKGSKKAVTKVQKKDGKKRKRSRKE) is disordered. Residue Pro-2 is modified to N-acetylproline. Position 6 is an N6-(2-hydroxyisobutyryl)lysine; alternate (Lys-6). An N6-(beta-hydroxybutyryl)lysine; alternate modification is found at Lys-6. Residue Lys-6 is modified to N6-acetyllysine; alternate. Residue Lys-6 is modified to N6-butyryllysine; alternate. N6-crotonyllysine; alternate is present on Lys-6. Lys-6 bears the N6-lactoyllysine; alternate mark. Lys-6 participates in a covalent cross-link: Glycyl lysine isopeptide (Lys-Gly) (interchain with G-Cter in SUMO2); alternate. The residue at position 7 (Ser-7) is an ADP-ribosylserine. Lys-12 carries the N6-(beta-hydroxybutyryl)lysine; alternate modification. N6-acetyllysine; alternate occurs at positions 12 and 13. An N6-crotonyllysine; alternate mark is found at Lys-12 and Lys-13. Position 12 is an N6-lactoyllysine; alternate (Lys-12). Lys-13 carries the N6-(2-hydroxyisobutyryl)lysine; alternate modification. Position 15 is a phosphoserine; by STK4/MST1 (Ser-15). N6-acetyllysine; alternate occurs at positions 16, 17, 21, and 24. Residues Lys-16, Lys-17, Lys-21, and Lys-24 each carry the N6-crotonyllysine; alternate modification. An N6-lactoyllysine; alternate mark is found at Lys-16, Lys-17, Lys-21, and Lys-24. Lys-17 is subject to N6-glutaryllysine; alternate. N6-(2-hydroxyisobutyryl)lysine; alternate is present on residues Lys-21 and Lys-24. Lys-21 is modified (N6-(beta-hydroxybutyryl)lysine; alternate). Lys-21 is subject to N6-butyryllysine; alternate. A Glycyl lysine isopeptide (Lys-Gly) (interchain with G-Cter in SUMO2); alternate cross-link involves residue Lys-21. Position 25 is an N6-(2-hydroxyisobutyryl)lysine (Lys-25). Position 35 is an N6-(2-hydroxyisobutyryl)lysine; alternate (Lys-35). An N6-(beta-hydroxybutyryl)lysine; alternate modification is found at Lys-35. Lys-35 carries the N6-crotonyllysine; alternate modification. An N6-glutaryllysine; alternate modification is found at Lys-35. At Lys-35 the chain carries N6-succinyllysine; alternate. Residue Lys-35 forms a Glycyl lysine isopeptide (Lys-Gly) (interchain with G-Cter in ubiquitin); alternate linkage. Glu-36 bears the PolyADP-ribosyl glutamic acid mark. Ser-37 is modified (phosphoserine; by AMPK). N6-(2-hydroxyisobutyryl)lysine; alternate occurs at positions 44, 47, and 58. An N6-lactoyllysine; alternate modification is found at Lys-44. N6-glutaryllysine; alternate is present on residues Lys-44 and Lys-47. Lys-47 is subject to N6-methyllysine; alternate. The residue at position 58 (Lys-58) is an N6,N6-dimethyllysine; alternate. At Arg-80 the chain carries Dimethylated arginine. The residue at position 86 (Lys-86) is an N6-(2-hydroxyisobutyryl)lysine; alternate. The residue at position 86 (Lys-86) is an N6-acetyllysine; alternate. N6-lactoyllysine; alternate is present on Lys-86. Lys-86 carries the post-translational modification N6,N6,N6-trimethyllysine; alternate. Residues Arg-87 and Arg-93 each carry the omega-N-methylarginine modification. Position 109 is an N6-(2-hydroxyisobutyryl)lysine; alternate (Lys-109). Lys-109 carries the post-translational modification N6-(beta-hydroxybutyryl)lysine; alternate. The residue at position 109 (Lys-109) is an N6-lactoyllysine; alternate. Residue Lys-109 is modified to N6-glutaryllysine; alternate. Lys-109 is modified (N6-methyllysine; alternate). O-linked (GlcNAc) serine glycosylation occurs at Ser-113. Residue Thr-116 is modified to Phosphothreonine. 2 positions are modified to N6-(2-hydroxyisobutyryl)lysine; alternate: Lys-117 and Lys-121. Lys-117 is subject to N6-(beta-hydroxybutyryl)lysine; alternate. N6-lactoyllysine; alternate is present on residues Lys-117 and Lys-121. N6-glutaryllysine; alternate is present on residues Lys-117 and Lys-121. N6-succinyllysine; alternate is present on residues Lys-117 and Lys-121. Residue Lys-117 is modified to N6-methylated lysine; alternate. A Glycyl lysine isopeptide (Lys-Gly) (interchain with G-Cter in ubiquitin); alternate cross-link involves residue Lys-121.

It belongs to the histone H2B family. The nucleosome is a histone octamer containing two molecules each of H2A, H2B, H3 and H4 assembled in one H3-H4 heterotetramer and two H2A-H2B heterodimers. The octamer wraps approximately 147 bp of DNA. Post-translationally, monoubiquitination at Lys-35 (H2BK34Ub) by the MSL1/MSL2 dimer is required for histone H3 'Lys-4' (H3K4me) and 'Lys-79' (H3K79me) methylation and transcription activation at specific gene loci, such as HOXA9 and MEIS1 loci. Similarly, monoubiquitination at Lys-121 (H2BK120Ub) by the RNF20/40 complex gives a specific tag for epigenetic transcriptional activation and is also prerequisite for histone H3 'Lys-4' and 'Lys-79' methylation. It also functions cooperatively with the FACT dimer to stimulate elongation by RNA polymerase II. H2BK120Ub also acts as a regulator of mRNA splicing: deubiquitination by USP49 is required for efficient cotranscriptional splicing of a large set of exons. In terms of processing, phosphorylated on Ser-15 (H2BS14ph) by STK4/MST1 during apoptosis; which facilitates apoptotic chromatin condensation. Also phosphorylated on Ser-15 in response to DNA double strand breaks (DSBs), and in correlation with somatic hypermutation and immunoglobulin class-switch recombination. Phosphorylation at Ser-37 (H2BS36ph) by AMPK in response to stress promotes transcription. GlcNAcylation at Ser-113 promotes monoubiquitination of Lys-121. It fluctuates in response to extracellular glucose, and associates with transcribed genes. Post-translationally, ADP-ribosylated by PARP1 or PARP2 on Ser-7 (H2BS6ADPr) in response to DNA damage. H2BS6ADPr promotes recruitment of CHD1L. Poly ADP-ribosylation on Glu-36 (H2BE35ADPr) by PARP1 regulates adipogenesis: it inhibits phosphorylation at Ser-37 (H2BS36ph), thereby blocking expression of pro-adipogenetic genes. In terms of processing, crotonylation (Kcr) is specifically present in male germ cells and marks testis-specific genes in post-meiotic cells, including X-linked genes that escape sex chromosome inactivation in haploid cells. Crotonylation marks active promoters and enhancers and confers resistance to transcriptional repressors. It is also associated with post-meiotically activated genes on autosomes. Hydroxybutyrylation of histones is induced by starvation. Post-translationally, lactylated in macrophages by EP300/P300 by using lactoyl-CoA directly derived from endogenous or exogenous lactate, leading to stimulates gene transcription.

The protein resides in the nucleus. It is found in the chromosome. Core component of nucleosome. Nucleosomes wrap and compact DNA into chromatin, limiting DNA accessibility to the cellular machineries which require DNA as a template. Histones thereby play a central role in transcription regulation, DNA repair, DNA replication and chromosomal stability. DNA accessibility is regulated via a complex set of post-translational modifications of histones, also called histone code, and nucleosome remodeling. The chain is Histone H2B type 2-B from Mus musculus (Mouse).